Reading from the N-terminus, the 270-residue chain is Neurotrophic factor BDNF precursor form (270 aa).

The first 18 residues, M1 to A18, serve as a signal peptide directing secretion. Positions A19–R151 are excised as a propeptide. Residue N144 is glycosylated (N-linked (GlcNAc...) asparagine). Cystine bridges form between C164–C231, C209–C260, and C219–C262.

It belongs to the NGF-beta family.

It localises to the secreted. Its function is as follows. Promotes the survival of neuronal populations that are all located either in the central nervous system or directly connected to it. This chain is Neurotrophic factor BDNF precursor form (bdnf), found in Cyprinus carpio (Common carp).